We begin with the raw amino-acid sequence, 832 residues long: Disintegrin and metalloproteinase domain-containing protein 23 (832 aa).

Over residues 1–10 the composition is skewed to polar residues; the sequence is MKPPGSSSRQ. Positions 1 to 37 are disordered; that stretch reads MKPPGSSSRQPPLAGCSLAGASCGPQRGPAGSVPASA. The signal sequence occupies residues 1 to 59; the sequence is MKPPGSSSRQPPLAGCSLAGASCGPQRGPAGSVPASAPARTPPCRLLLVLLLLPPLAAS. Residues 28 to 37 are compositionally biased toward low complexity; that stretch reads GPAGSVPASA. Positions 60-286 are excised as a propeptide; the sequence is SRPRAWGAAA…ELQWLKRRKR (227 aa). Residues Asn-76, Asn-96, Asn-100, and Asn-263 are each glycosylated (N-linked (GlcNAc...) asparagine). Topologically, residues 287-792 are extracellular; sequence AVNPSRGIFE…EGPKGPSATN (506 aa). The region spanning 299 to 496 is the Peptidase M12B domain; sequence KYLELMIVND…GGGACLFNRP (198 aa). 3 cysteine pairs are disulfide-bonded: Cys-408/Cys-491, Cys-450/Cys-475, and Cys-452/Cys-459. The Disintegrin domain maps to 502–588; sequence PTECGNGYVE…QCPPNLHKQD (87 aa). 2 N-linked (GlcNAc...) asparagine glycosylation sites follow: Asn-547 and Asn-548. The cysteines at positions 560 and 580 are disulfide-linked. The segment at 563–568 is may bind the integrin receptor; it reads AVNECD. Asn-664 and Asn-732 each carry an N-linked (GlcNAc...) asparagine glycan. Positions 732 to 769 constitute an EGF-like domain; it reads NMSSCPLDSKGKVCSGHGVCSNEATCICDFTWAGTDCS. Intrachain disulfides connect Cys-736–Cys-751, Cys-745–Cys-757, and Cys-759–Cys-768. The chain crosses the membrane as a helical span at residues 793 to 813; sequence LIIGSIAGAILVAAIVLGGTG. Residues 814 to 832 are Cytoplasmic-facing; that stretch reads WGFKNVKKRRFDPTQQGPI.

Can bind to LGI1 and LGI4. Ligand for integrin alpha-V/beta-3. In terms of tissue distribution, highly expressed in the brain and weakly expressed in the heart. In the brain, expressed prominently in the amygdala, caudate nucleus, hypothalamus, thalamus, cerebral cortex and occipital pole.

It is found in the cell membrane. The protein resides in the secreted. Functionally, may play a role in cell-cell and cell-matrix interactions. This is a non-catalytic metalloprotease-like protein. The protein is Disintegrin and metalloproteinase domain-containing protein 23 (ADAM23) of Homo sapiens (Human).